Consider the following 326-residue polypeptide: Fructose-1,6-bisphosphatase class 1 (326 aa).

Mg(2+) contacts are provided by E90, D111, L113, and D114. Residues 114–117 (DGSS), Y222, and K253 each bind substrate. E259 is a binding site for Mg(2+).

It belongs to the FBPase class 1 family. Homotetramer. Requires Mg(2+) as cofactor.

The protein localises to the cytoplasm. The catalysed reaction is beta-D-fructose 1,6-bisphosphate + H2O = beta-D-fructose 6-phosphate + phosphate. It participates in carbohydrate biosynthesis; gluconeogenesis. This is Fructose-1,6-bisphosphatase class 1 from Citrifermentans bemidjiense (strain ATCC BAA-1014 / DSM 16622 / JCM 12645 / Bem) (Geobacter bemidjiensis).